The primary structure comprises 326 residues: tRNA N6-adenosine threonylcarbamoyltransferase (326 aa).

Fe cation-binding residues include His-113 and His-117. Substrate-binding positions include 134-138 (VASGG), Asp-167, Gly-180, and Asn-267. Asp-291 lines the Fe cation pocket.

It belongs to the KAE1 / TsaD family. Fe(2+) serves as cofactor.

The protein localises to the cytoplasm. It catalyses the reaction L-threonylcarbamoyladenylate + adenosine(37) in tRNA = N(6)-L-threonylcarbamoyladenosine(37) in tRNA + AMP + H(+). Its function is as follows. Required for the formation of a threonylcarbamoyl group on adenosine at position 37 (t(6)A37) in tRNAs that read codons beginning with adenine. Is involved in the transfer of the threonylcarbamoyl moiety of threonylcarbamoyl-AMP (TC-AMP) to the N6 group of A37, together with TsaE and TsaB. TsaD likely plays a direct catalytic role in this reaction. The polypeptide is tRNA N6-adenosine threonylcarbamoyltransferase (Thermus thermophilus (strain ATCC 27634 / DSM 579 / HB8)).